A 354-amino-acid chain; its full sequence is Kelch domain-containing protein 8B (354 aa).

8 Kelch repeats span residues 1–31 (MAAG…HQDG), 32–79 (HLLV…VLGK), 81–127 (VLVV…ERDG), 128–175 (MVYA…LHGN), 176–222 (KIYV…MAEG), 224–281 (VFSL…SLGG), 282–329 (NIVA…QAGP), and 331–354 (LFVI…RDGV).

Its subcellular location is the cytoplasm. The protein localises to the midbody. Functionally, involved in pinching off the separated nuclei at the cleavage furrow and in cytokinesis. Required for mitotic integrity and maintenance of chromosomal stability. Protects cells against mitotic errors, centrosomal amplification, micronucleus formation and aneuploidy. Plays a key role of midbody function involving abscission of the daughter cells during cytokinesis and appropriate chromosomal and nuclear segregation into the daughter cells. This Mus musculus (Mouse) protein is Kelch domain-containing protein 8B (Klhdc8b).